We begin with the raw amino-acid sequence, 372 residues long: sn-glycerol-3-phosphate import ATP-binding protein UgpC (372 aa).

One can recognise an ABC transporter domain in the interval 2–233 (LDIQQLVKTY…PASTFVASFI (232 aa)). Residue 35-42 (GPSGCGKS) participates in ATP binding.

It belongs to the ABC transporter superfamily. sn-glycerol-3-phosphate importer (TC 3.A.1.1.3) family. As to quaternary structure, the complex is composed of two ATP-binding proteins (UgpC), two transmembrane proteins (UgpA and UgpE) and a solute-binding protein (UgpB).

It localises to the cell inner membrane. It catalyses the reaction sn-glycerol 3-phosphate(out) + ATP + H2O = sn-glycerol 3-phosphate(in) + ADP + phosphate + H(+). Functionally, part of the ABC transporter complex UgpBAEC involved in sn-glycerol-3-phosphate (G3P) import. Responsible for energy coupling to the transport system. In Vibrio vulnificus (strain YJ016), this protein is sn-glycerol-3-phosphate import ATP-binding protein UgpC.